Consider the following 481-residue polypeptide: Ankyrin repeat, SAM and basic leucine zipper domain-containing protein 1 (481 aa).

Residues 1–10 (MASGALRGLA) show a composition bias toward low complexity. The segment at 1-23 (MASGALRGLAVAGGGESSDSEDD) is disordered. Serine 17, serine 18, and serine 20 each carry phosphoserine. 6 ANK repeats span residues 45 to 74 (EKSE…SVDS), 78 to 107 (YGWT…NASF), 110 to 144 (DKQT…DPNI), 148 to 177 (RLMT…EVNA), 181 to 210 (NGYT…NKML), and 214 to 243 (DGKI…PLEG). Positions 272–334 (SYTAFGDLEI…KILSALKELE (63 aa)) constitute an SAM domain.

Interacts with DDX4, PIWIL1, RANBP9 and TDRD1.

The protein resides in the cytoplasm. Its function is as follows. Plays a central role during spermatogenesis by repressing transposable elements and preventing their mobilization, which is essential for the germline integrity. Acts via the piRNA metabolic process, which mediates the repression of transposable elements during meiosis by forming complexes composed of piRNAs and Piwi proteins and governs the methylation and subsequent repression of transposons. Its association with pi-bodies suggests a participation in the primary piRNAs metabolic process. Required prior to the pachytene stage to facilitate the production of multiple types of piRNAs, including those associated with repeats involved in the regulation of retrotransposons. May act by mediating protein-protein interactions during germ cell maturation. The sequence is that of Ankyrin repeat, SAM and basic leucine zipper domain-containing protein 1 (ASZ1) from Eulemur macaco macaco (Black lemur).